Reading from the N-terminus, the 336-residue chain is Palmitoyltransferase SWF1 (336 aa).

Over 1-2 (MS) the chain is Lumenal. The chain crosses the membrane as a helical span at residues 3 to 23 (WNLLFVLLIGFVVLILLSPVF). Topologically, residues 24-50 (KSTWPFSTFYRNVFQPFLVDDQKYRWK) are cytoplasmic. The chain crosses the membrane as a helical span at residues 51-71 (LHLVPLFYTSIYLYLVYTYHM). At 72–86 (RVESTIKNELFLLER) the chain is on the lumenal side. The helical transmembrane segment at 87–107 (ILIVPIIILPPVALGILAMVS) threads the bilayer. At 108 to 179 (RAEDSKDHKS…CIGKGNYLQF (72 aa)) the chain is on the cytoplasmic side. The 51-residue stretch at 134-184 (IKCSTCRIVKPARSKHCSICNRCVLVADHHCIWINNCIGKGNYLQFYLFLI) folds into the DHHC domain. Residues 180-200 (YLFLISNIFSMCYAFLRLWYI) traverse the membrane as a helical segment. The Lumenal segment spans residues 201–216 (SLNSTSTLPRAVLTLT). A helical transmembrane segment spans residues 217–237 (ILCGCFTIICAIFTYLQLAIV). Residues 238–336 (KEGMTTNEQD…TFLANLTDLI (99 aa)) lie on the Cytoplasmic side of the membrane.

The protein belongs to the DHHC palmitoyltransferase family. SWF1 subfamily.

The protein localises to the endoplasmic reticulum membrane. It carries out the reaction L-cysteinyl-[protein] + hexadecanoyl-CoA = S-hexadecanoyl-L-cysteinyl-[protein] + CoA. Functionally, palmitoyltransferase that targets several endosomal SNAREs. Palmitoylates the SNAREs SNC1, SNC2, SYN8 and TLG1, at cysteine residues close to the cytoplasmic end of their transmembrane domain. May have a role in the cellular quality control of transmembrane domain-containing proteins. This Saccharomyces cerevisiae (strain ATCC 204508 / S288c) (Baker's yeast) protein is Palmitoyltransferase SWF1 (SWF1).